Reading from the N-terminus, the 556-residue chain is MGVHSFLCSSPWFRMVTDLQKEIQEAVQQRRNFAIISHPDAGKTTLTEKLLLYGGAIQEAGAVKAKRSQRAATSDWMELEKQRGISITSTVLQFNYHDCTINLLDTPGHQDFSEDTYRTLAAADNAVMLEDAAKGLEPQTRKLFEVCRMRNIPIFTFFNKMDRPGREPLELLDEIEQELGLQTYAVNWPIGSGDRFRGVFDRRKQQVHLFERSVHGKRQAKDTTLEWGDPQLADLIEPDLLQQLQDELELLEGVGTEFDLEAIHAGQLTPVFWGSAMTNFGVELFLEAFLDYALKPGARRSSVGDMAPDYPEFSGFVFKLQANMDPRHRDRIAFVRVCTGKFEKDMTVQHARSGRTLRLSRPQKLFGQDREVLDDAYPGDMIGLNNPGMFAIGDTIYTGKRLEYDGIPCFSPEIFAYLRNPNPSKFKPFRKGVSELREEGAVQIMYSADSAKRDSILAAVGQLQLEVVQYRLENEYGVETLLEPLPFSVARWVEGGWDVLEKVGRLFNTTTVKDTWGRPVLLFKNEWNLRQIEADHPELQLRSVAPVAAGQKPIEV.

The region spanning 28 to 297 (QQRRNFAIIS…AFLDYALKPG (270 aa)) is the tr-type G domain. GTP-binding positions include 37-44 (SHPDAGKT), 105-109 (DTPGH), and 159-162 (NKMD).

It belongs to the TRAFAC class translation factor GTPase superfamily. Classic translation factor GTPase family. PrfC subfamily.

It is found in the cytoplasm. In terms of biological role, increases the formation of ribosomal termination complexes and stimulates activities of RF-1 and RF-2. It binds guanine nucleotides and has strong preference for UGA stop codons. It may interact directly with the ribosome. The stimulation of RF-1 and RF-2 is significantly reduced by GTP and GDP, but not by GMP. The chain is Peptide chain release factor 3 from Synechococcus sp. (strain ATCC 27144 / PCC 6301 / SAUG 1402/1) (Anacystis nidulans).